We begin with the raw amino-acid sequence, 578 residues long: Proline--tRNA ligase (578 aa).

The protein belongs to the class-II aminoacyl-tRNA synthetase family. ProS type 1 subfamily. In terms of assembly, homodimer.

Its subcellular location is the cytoplasm. The catalysed reaction is tRNA(Pro) + L-proline + ATP = L-prolyl-tRNA(Pro) + AMP + diphosphate. Catalyzes the attachment of proline to tRNA(Pro) in a two-step reaction: proline is first activated by ATP to form Pro-AMP and then transferred to the acceptor end of tRNA(Pro). As ProRS can inadvertently accommodate and process non-cognate amino acids such as alanine and cysteine, to avoid such errors it has two additional distinct editing activities against alanine. One activity is designated as 'pretransfer' editing and involves the tRNA(Pro)-independent hydrolysis of activated Ala-AMP. The other activity is designated 'posttransfer' editing and involves deacylation of mischarged Ala-tRNA(Pro). The misacylated Cys-tRNA(Pro) is not edited by ProRS. This chain is Proline--tRNA ligase, found in Burkholderia vietnamiensis (strain G4 / LMG 22486) (Burkholderia cepacia (strain R1808)).